Consider the following 308-residue polypeptide: CMP-N-acetylneuraminate:beta-galactoside alpha-2,3-sialyltransferase (308 aa).

D201 functions as the Proton acceptor in the catalytic mechanism. Residues 221-225, 242-243, and 262-263 each bind CMP-N-acetyl-beta-neuraminate; these read LPHPR, FE, and SS. The Proton donor role is filled by H223.

Belongs to the glycosyltransferase 52 family. Requires Divalent metal cations are not required for the alpha-2,3-sialyltransferase activity. as cofactor.

In terms of biological role, catalyzes the transfer of sialic acid from the substrate CMP-N-acetylneuraminate to lactosyl lipids as preferred acceptor substrates in vitro, forming alpha-2,3-linked sialosides. Beta-1,4-linked galactosyl lipids are better substrates than beta-1,3-linked galactosyl lipids. The natural acceptor substrate may be cell surface oligosaccharides in lipooligosaccharide (LOS), whose sialylation has been demonstrated vital for the virulence of P.multocida. The sequence is that of CMP-N-acetylneuraminate:beta-galactoside alpha-2,3-sialyltransferase (lst) from Pasteurella multocida (strain Pm70).